Consider the following 250-residue polypeptide: 2,5-dichloro-2,5-cyclohexadiene-1,4-diol dehydrogenase LinX (250 aa).

Positions 38, 64, 65, 156, 160, 191, and 194 each coordinate NAD(+). Tyr156 acts as the Proton acceptor in catalysis.

It belongs to the short-chain dehydrogenases/reductases (SDR) family.

The catalysed reaction is 2,5-dichlorocyclohexa-2,5-dien-1,4-diol + NAD(+) = 2,5-dichlorohydroquinone + NADH + H(+). In terms of biological role, catalyzes the degradation of 2,5-dichloro-2,5-cyclohexadiene-1,4-diol (2,5-DDOL) into 2,5-dichlorohydroquinone (2,5-DCHQ) in vitro. LinX appears not to be involved in gamma-hexachlorocyclohexane (gamma-HCH) degradation pathway, in contrast to LinC which has the same enzymatic activity. The polypeptide is 2,5-dichloro-2,5-cyclohexadiene-1,4-diol dehydrogenase LinX (Sphingobium indicum (strain DSM 16412 / CCM 7286 / MTCC 6364 / B90A)).